A 752-amino-acid chain; its full sequence is Photosystem I P700 chlorophyll a apoprotein A1 (752 aa).

The next 8 helical transmembrane spans lie at 73 to 96 (IFSA…FHGA), 159 to 182 (LYCT…FHYH), 198 to 222 (MNHH…HLSL), 294 to 312 (TAHH…GHMY), 349 to 372 (WHAQ…HHMY), 388 to 414 (LSLF…IFMV), 436 to 458 (AIVS…LYIH), and 533 to 551 (FMVH…LILV). Positions 575 and 584 each coordinate [4Fe-4S] cluster. 2 consecutive transmembrane segments (helical) span residues 591–612 (HVFL…HFSW) and 666–688 (LSAY…MFLF). Residue His677 coordinates chlorophyll a'. Chlorophyll a-binding residues include Met685 and Tyr693. Trp694 contributes to the phylloquinone binding site. A helical membrane pass occupies residues 726-746 (AVGVAHYLLGGIGTTWAFFLA).

It belongs to the PsaA/PsaB family. As to quaternary structure, the PsaA/B heterodimer binds the P700 chlorophyll special pair and subsequent electron acceptors. PSI consists of a core antenna complex that captures photons, and an electron transfer chain that converts photonic excitation into a charge separation. The eukaryotic PSI reaction center is composed of at least 11 subunits. The cofactor is P700 is a chlorophyll a/chlorophyll a' dimer, A0 is one or more chlorophyll a, A1 is one or both phylloquinones and FX is a shared 4Fe-4S iron-sulfur center..

Its subcellular location is the plastid. The protein localises to the chloroplast thylakoid membrane. It catalyses the reaction reduced [plastocyanin] + hnu + oxidized [2Fe-2S]-[ferredoxin] = oxidized [plastocyanin] + reduced [2Fe-2S]-[ferredoxin]. Its function is as follows. PsaA and PsaB bind P700, the primary electron donor of photosystem I (PSI), as well as the electron acceptors A0, A1 and FX. PSI is a plastocyanin/cytochrome c6-ferredoxin oxidoreductase, converting photonic excitation into a charge separation, which transfers an electron from the donor P700 chlorophyll pair to the spectroscopically characterized acceptors A0, A1, FX, FA and FB in turn. Oxidized P700 is reduced on the lumenal side of the thylakoid membrane by plastocyanin or cytochrome c6. This Porphyra purpurea (Red seaweed) protein is Photosystem I P700 chlorophyll a apoprotein A1.